Reading from the N-terminus, the 181-residue chain is Peptide deformylase 2 (181 aa).

The Fe cation site is built by Cys109 and His151. Residue Glu152 is part of the active site. His155 contributes to the Fe cation binding site.

Belongs to the polypeptide deformylase family. It depends on Fe(2+) as a cofactor.

It catalyses the reaction N-terminal N-formyl-L-methionyl-[peptide] + H2O = N-terminal L-methionyl-[peptide] + formate. Its function is as follows. Removes the formyl group from the N-terminal Met of newly synthesized proteins. Requires at least a dipeptide for an efficient rate of reaction. N-terminal L-methionine is a prerequisite for activity but the enzyme has broad specificity at other positions. The sequence is that of Peptide deformylase 2 from Shewanella oneidensis (strain ATCC 700550 / JCM 31522 / CIP 106686 / LMG 19005 / NCIMB 14063 / MR-1).